The sequence spans 634 residues: Dynein axonemal assembly factor 1 (634 aa).

Residues 1–80 are disordered; sequence MHPEVSEPPV…SRDDREDRGP (80 aa). Over residues 22–42 the composition is skewed to basic and acidic residues; that stretch reads AGDHGDAGPGIRKEEISETKE. Residues 48-62 are compositionally biased toward polar residues; the sequence is CTTSCPSQQQPSGDN. Residues 70 to 80 are compositionally biased toward basic and acidic residues; the sequence is HSRDDREDRGP. 6 LRR repeats span residues 101-123, 124-145, 146-167, 168-189, 190-211, and 215-236; these read ALNDTLYLHFKGFDRIENLEEYT, GLRCLWLECNGIQRIENLQAQS, ELRCLFLQVNLLHKIENLEPLQ, KLDALNLSNNYIKTIENLSCLP, VLNTLQMAHNRLETVADIEHLR, and RLCVLDLSHNALSDPEILSVLE. Residues 249–288 enclose the LRRCT domain; the sequence is NPVTKHIPNYRRTVTVRLKHLTYLDDRPVFPKDRACAEAW. Basic and acidic residues predominate over residues 326–336; sequence EERKKARDRGE. The segment at 326–358 is disordered; it reads EERKKARDRGETPLPDSEGSIPTSPEAEEKQPM. Phosphoserine is present on Ser-349. At Thr-462 the chain carries Phosphothreonine. Phosphoserine occurs at positions 465 and 488. Disordered regions lie at residues 481–505 and 559–634; these read ISSLSDDSDPELDELSLSTSEATPT and ELND…FGLD.

It belongs to the DNAAF1 family.

The protein localises to the cell projection. Its subcellular location is the cilium. In terms of biological role, cilium-specific protein required for the stability of the ciliary architecture. Plays a role in cytoplasmic preassembly of dynein arms. Involved in regulation of microtubule-based cilia and actin-based brush border microvilli. In Mus musculus (Mouse), this protein is Dynein axonemal assembly factor 1 (Dnaaf1).